Here is a 247-residue protein sequence, read N- to C-terminus: Adenosylcobinamide-GDP ribazoletransferase (247 aa).

Helical transmembrane passes span 34 to 54 (IITFPLIGLLLGAISGLVFMV), 57 to 77 (AWCGAPLAALFSVLVLALMTG), 113 to 133 (GGLALIFVVLAKILVLSELAL), 138 to 158 (ILASLAAACAVSRGTAALLMY), and 194 to 214 (VLLLGMHGVAAMVVTMVAIFI).

This sequence belongs to the CobS family. Mg(2+) is required as a cofactor.

The protein localises to the cell inner membrane. The enzyme catalyses alpha-ribazole + adenosylcob(III)inamide-GDP = adenosylcob(III)alamin + GMP + H(+). It carries out the reaction alpha-ribazole 5'-phosphate + adenosylcob(III)inamide-GDP = adenosylcob(III)alamin 5'-phosphate + GMP + H(+). The protein operates within cofactor biosynthesis; adenosylcobalamin biosynthesis; adenosylcobalamin from cob(II)yrinate a,c-diamide: step 7/7. In terms of biological role, joins adenosylcobinamide-GDP and alpha-ribazole to generate adenosylcobalamin (Ado-cobalamin). Also synthesizes adenosylcobalamin 5'-phosphate from adenosylcobinamide-GDP and alpha-ribazole 5'-phosphate. This Shigella flexneri serotype 5b (strain 8401) protein is Adenosylcobinamide-GDP ribazoletransferase.